A 274-amino-acid chain; its full sequence is Large ribosomal subunit protein uL2 (274 aa).

Positions 221–274 are disordered; sequence RGTAMNPVDHPHGGGEGRNFGKHPVTPWGVQTKGKKTRSNKRTDKFIVRRRSKK.

This sequence belongs to the universal ribosomal protein uL2 family. Part of the 50S ribosomal subunit. Forms a bridge to the 30S subunit in the 70S ribosome.

In terms of biological role, one of the primary rRNA binding proteins. Required for association of the 30S and 50S subunits to form the 70S ribosome, for tRNA binding and peptide bond formation. It has been suggested to have peptidyltransferase activity; this is somewhat controversial. Makes several contacts with the 16S rRNA in the 70S ribosome. The sequence is that of Large ribosomal subunit protein uL2 from Yersinia enterocolitica.